The primary structure comprises 507 residues: Monocarboxylate transporter 9 (507 aa).

Residues 1-12 lie on the Extracellular side of the membrane; that stretch reads MVYRKPPDGGWG. A helical membrane pass occupies residues 13 to 33; the sequence is WVIVIVSFFTQFLCYGSPLAV. Residues 34 to 52 are Cytoplasmic-facing; sequence GVLYLEWLDAFGEGKGKTA. A helical membrane pass occupies residues 53–73; that stretch reads WVGSLANGIGLLASPVCSICV. The Extracellular segment spans residues 74 to 79; that stretch reads SSFGAR. The chain crosses the membrane as a helical span at residues 80–100; sequence PVAIFSGFMVAGGLMMSSFAP. Residues 101-102 lie on the Cytoplasmic side of the membrane; sequence NI. A helical membrane pass occupies residues 103-123; the sequence is YFLYLSYGIVVGLGCGLLYNA. At 124 to 136 the chain is on the extracellular side; the sequence is TVTITCQYFDKRR. Residues 137–157 form a helical membrane-spanning segment; that stretch reads GLALGLISTGSSVGLFIYAAL. Topologically, residues 158–163 are cytoplasmic; sequence QRELIE. The helical transmembrane segment at 164–184 threads the bilayer; it reads LYGLDGCLLIVGALSLNILAC. Topologically, residues 185-302 are extracellular; the sequence is GSLMRPLESS…EETVVLFKNR (118 aa). A helical membrane pass occupies residues 303-323; that stretch reads VFSALFFAILLFDIGGFPPSL. The Cytoplasmic portion of the chain corresponds to 324 to 340; sequence LMEDIARSANINEEDYH. Residues 341 to 361 traverse the membrane as a helical segment; the sequence is MPLVSIIGIMTAIGKLILGIL. The Extracellular segment spans residues 362–369; sequence ADFKWVNT. A helical transmembrane segment spans residues 370–390; that stretch reads LYLYVLTLLMMGAALLAIPFA. Residues 391–395 are Cytoplasmic-facing; sequence RSYFT. A helical membrane pass occupies residues 396–416; sequence LAVLSGILGFLTGNWSIFPYV. Over 417 to 430 the chain is Extracellular; it reads TTKTVGIEKLTHAY. A helical membrane pass occupies residues 431–451; that stretch reads GILMFFAGLGNSLGPPIVGWF. Over 452–460 the chain is Cytoplasmic; that stretch reads YDWTQEYDT. A helical transmembrane segment spans residues 461-481; that stretch reads AFYFSGFCVLLGGFLLLLAAL. The Extracellular portion of the chain corresponds to 482-507; that stretch reads PCWNACTDRSSKLPPNTYSYKVASSA.

This sequence belongs to the major facilitator superfamily. Monocarboxylate porter (TC 2.A.1.13) family.

The protein resides in the cell membrane. It carries out the reaction creatine(in) = creatine(out). It catalyses the reaction (R)-carnitine(in) = (R)-carnitine(out). Its function is as follows. Extracellular pH-and Na(+)-sensitive low-affinity creatine transporter. Also functions as a pH-independent carnitine efflux transporter. In Gallus gallus (Chicken), this protein is Monocarboxylate transporter 9 (SLC16A9).